Here is a 201-residue protein sequence, read N- to C-terminus: UPF0177 protein YajF (201 aa).

5 helical membrane passes run 10–30 (TVIL…YVEY), 44–64 (ITVN…MLGI), 82–102 (ILIL…SQFI), 119–139 (VMGS…APIL), and 159–179 (FVFS…VFLI).

It belongs to the UPF0177 family.

The protein localises to the cell membrane. The chain is UPF0177 protein YajF (yajF) from Lactococcus lactis subsp. lactis (strain IL1403) (Streptococcus lactis).